The chain runs to 446 residues: Glutamate-1-semialdehyde 2,1-aminomutase (446 aa).

Residue K278 is modified to N6-(pyridoxal phosphate)lysine.

Belongs to the class-III pyridoxal-phosphate-dependent aminotransferase family. HemL subfamily. Homodimer. Requires pyridoxal 5'-phosphate as cofactor.

The protein localises to the cytoplasm. The catalysed reaction is (S)-4-amino-5-oxopentanoate = 5-aminolevulinate. It participates in porphyrin-containing compound metabolism; protoporphyrin-IX biosynthesis; 5-aminolevulinate from L-glutamyl-tRNA(Glu): step 2/2. The protein is Glutamate-1-semialdehyde 2,1-aminomutase of Deinococcus geothermalis (strain DSM 11300 / CIP 105573 / AG-3a).